Reading from the N-terminus, the 300-residue chain is Ribonuclease HIII (300 aa).

Residues 86–300 (RPRLGVDESG…FYEICDSTDI (215 aa)) enclose the RNase H type-2 domain. Residues Asp92, Glu93, and Asp196 each contribute to the a divalent metal cation site.

Belongs to the RNase HII family. RnhC subfamily. It depends on Mn(2+) as a cofactor. Mg(2+) is required as a cofactor.

It is found in the cytoplasm. The catalysed reaction is Endonucleolytic cleavage to 5'-phosphomonoester.. Its function is as follows. Endonuclease that specifically degrades the RNA of RNA-DNA hybrids. This is Ribonuclease HIII from Chlamydia abortus (strain DSM 27085 / S26/3) (Chlamydophila abortus).